The following is a 231-amino-acid chain: Orotidine 5'-phosphate decarboxylase (231 aa).

Residues aspartate 11, lysine 33, 60 to 69 (DLKLHDIPNT), threonine 119, arginine 181, glutamine 190, glycine 210, and arginine 211 each bind substrate. The Proton donor role is filled by lysine 62.

This sequence belongs to the OMP decarboxylase family. Type 1 subfamily. Homodimer.

It carries out the reaction orotidine 5'-phosphate + H(+) = UMP + CO2. Its pathway is pyrimidine metabolism; UMP biosynthesis via de novo pathway; UMP from orotate: step 2/2. Functionally, catalyzes the decarboxylation of orotidine 5'-monophosphate (OMP) to uridine 5'-monophosphate (UMP). This chain is Orotidine 5'-phosphate decarboxylase, found in Malacoplasma penetrans (strain HF-2) (Mycoplasma penetrans).